Consider the following 291-residue polypeptide: Shikimate dehydrogenase (NADP(+)) (291 aa).

Shikimate contacts are provided by residues 26-28 and Ser73; that span reads SLS. The active-site Proton acceptor is the Lys77. Positions 98 and 113 each coordinate shikimate. NADP(+)-binding positions include 137–141 and Val238; that span reads GAGGA. Position 240 (Tyr240) interacts with shikimate. Gly261 lines the NADP(+) pocket.

The protein belongs to the shikimate dehydrogenase family. As to quaternary structure, homodimer.

It carries out the reaction shikimate + NADP(+) = 3-dehydroshikimate + NADPH + H(+). Its pathway is metabolic intermediate biosynthesis; chorismate biosynthesis; chorismate from D-erythrose 4-phosphate and phosphoenolpyruvate: step 4/7. Its function is as follows. Involved in the biosynthesis of the chorismate, which leads to the biosynthesis of aromatic amino acids. Catalyzes the reversible NADPH linked reduction of 3-dehydroshikimate (DHSA) to yield shikimate (SA). The polypeptide is Shikimate dehydrogenase (NADP(+)) (Listeria innocua serovar 6a (strain ATCC BAA-680 / CLIP 11262)).